Here is a 187-residue protein sequence, read N- to C-terminus: Peptidyl-tRNA hydrolase (187 aa).

Y18 contacts tRNA. H23 (proton acceptor) is an active-site residue. Residues F65, N67, and N113 each coordinate tRNA.

This sequence belongs to the PTH family. In terms of assembly, monomer.

Its subcellular location is the cytoplasm. The catalysed reaction is an N-acyl-L-alpha-aminoacyl-tRNA + H2O = an N-acyl-L-amino acid + a tRNA + H(+). In terms of biological role, hydrolyzes ribosome-free peptidyl-tRNAs (with 1 or more amino acids incorporated), which drop off the ribosome during protein synthesis, or as a result of ribosome stalling. Catalyzes the release of premature peptidyl moieties from peptidyl-tRNA molecules trapped in stalled 50S ribosomal subunits, and thus maintains levels of free tRNAs and 50S ribosomes. In Coxiella burnetii (strain RSA 331 / Henzerling II), this protein is Peptidyl-tRNA hydrolase.